A 427-amino-acid polypeptide reads, in one-letter code: Glucose-1-phosphate adenylyltransferase (427 aa).

Alpha-D-glucose 1-phosphate-binding positions include Tyr121, Gly186, 201–202 (EK), and Ser219.

The protein belongs to the bacterial/plant glucose-1-phosphate adenylyltransferase family. In terms of assembly, homotetramer.

It carries out the reaction alpha-D-glucose 1-phosphate + ATP + H(+) = ADP-alpha-D-glucose + diphosphate. It participates in glycan biosynthesis; glycogen biosynthesis. Its function is as follows. Involved in the biosynthesis of ADP-glucose, a building block required for the elongation reactions to produce glycogen. Catalyzes the reaction between ATP and alpha-D-glucose 1-phosphate (G1P) to produce pyrophosphate and ADP-Glc. This is Glucose-1-phosphate adenylyltransferase from Corynebacterium diphtheriae (strain ATCC 700971 / NCTC 13129 / Biotype gravis).